The primary structure comprises 295 residues: Zinc finger CCCH domain-containing protein 44 (295 aa).

The interval 1-31 (MEAGGGKRAAPEGTNGAAKRARASESSQVGV) is disordered. 2 consecutive C3H1-type zinc fingers follow at residues 32-60 (GSKLKPCTKFFSTSGCPFGSSCHFLHNFP) and 98-126 (SVKTRMCNKYNTAEGCKWGSKCHFAHGER). Residues 166–230 (SATAKISVDA…DQIKHASAMV (65 aa)) enclose the KH domain. Residues 259 to 286 (NFKTKLCENFNKGSCTFGDRCHFAHGES) form a C3H1-type 3 zinc finger.

The chain is Zinc finger CCCH domain-containing protein 44 from Oryza sativa subsp. japonica (Rice).